A 262-amino-acid polypeptide reads, in one-letter code: 3-methyl-2-oxobutanoate hydroxymethyltransferase (262 aa).

Positions 43 and 82 each coordinate Mg(2+). 3-methyl-2-oxobutanoate contacts are provided by residues 43-44 (DS), Asp82, and Lys111. Glu113 provides a ligand contact to Mg(2+). The active-site Proton acceptor is the Glu180.

Belongs to the PanB family. As to quaternary structure, homodecamer; pentamer of dimers. The cofactor is Mg(2+).

The protein resides in the cytoplasm. It catalyses the reaction 3-methyl-2-oxobutanoate + (6R)-5,10-methylene-5,6,7,8-tetrahydrofolate + H2O = 2-dehydropantoate + (6S)-5,6,7,8-tetrahydrofolate. Its pathway is cofactor biosynthesis; (R)-pantothenate biosynthesis; (R)-pantoate from 3-methyl-2-oxobutanoate: step 1/2. In terms of biological role, catalyzes the reversible reaction in which hydroxymethyl group from 5,10-methylenetetrahydrofolate is transferred onto alpha-ketoisovalerate to form ketopantoate. The sequence is that of 3-methyl-2-oxobutanoate hydroxymethyltransferase from Wolinella succinogenes (strain ATCC 29543 / DSM 1740 / CCUG 13145 / JCM 31913 / LMG 7466 / NCTC 11488 / FDC 602W) (Vibrio succinogenes).